A 306-amino-acid chain; its full sequence is Protein-methionine-sulfoxide reductase catalytic subunit MsrP (306 aa).

A signal peptide (tat-type signal) is located at residues 1 to 44 (MLIRHAPDLTDNDVTGHGLYLRRRDFIGGAAGLGLMAAAGSASA). Residues Asn69, 72 to 73 (YE), Cys127, Thr162, Asn210, Arg215, and 226 to 228 (GIK) each bind Mo-molybdopterin.

The protein belongs to the MsrP family. As to quaternary structure, heterodimer of a catalytic subunit (MsrP) and a heme-binding subunit (MsrQ). Requires Mo-molybdopterin as cofactor. In terms of processing, predicted to be exported by the Tat system. The position of the signal peptide cleavage has not been experimentally proven.

Its subcellular location is the periplasm. The catalysed reaction is L-methionyl-[protein] + a quinone + H2O = L-methionyl-(S)-S-oxide-[protein] + a quinol. It catalyses the reaction L-methionyl-[protein] + a quinone + H2O = L-methionyl-(R)-S-oxide-[protein] + a quinol. Its function is as follows. Part of the MsrPQ system that repairs oxidized periplasmic proteins containing methionine sulfoxide residues (Met-O), using respiratory chain electrons. Thus protects these proteins from oxidative-stress damage caused by reactive species of oxygen and chlorine generated by the host defense mechanisms. MsrPQ is essential for the maintenance of envelope integrity under bleach stress, rescuing a wide series of structurally unrelated periplasmic proteins from methionine oxidation. The catalytic subunit MsrP is non-stereospecific, being able to reduce both (R-) and (S-) diastereoisomers of methionine sulfoxide. This chain is Protein-methionine-sulfoxide reductase catalytic subunit MsrP, found in Caulobacter sp. (strain K31).